The following is a 574-amino-acid chain: G protein-coupled receptor kinase 4 (574 aa).

N-acetylmethionine is present on Met-1. Residues Met-1–Leu-153 are N-terminal. One can recognise an RGS domain in the interval Asp-51–Leu-171. Positions Phe-186–Phe-448 constitute a Protein kinase domain. ATP is bound by residues Leu-192–Val-200 and Lys-215. Asp-311 acts as the Proton acceptor in catalysis. The region spanning Lys-449–Glu-514 is the AGC-kinase C-terminal domain. Ser-484 carries the phosphoserine modification.

This sequence belongs to the protein kinase superfamily. AGC Ser/Thr protein kinase family. GPRK subfamily. Interacts with DRD3. Palmitoylated.

It is found in the cytoplasm. Its subcellular location is the cell cortex. It carries out the reaction [G-protein-coupled receptor] + ATP = [G-protein-coupled receptor]-phosphate + ADP + H(+). Inhibited by heparin. Its function is as follows. Specifically phosphorylates the activated forms of G protein-coupled receptors. This is G protein-coupled receptor kinase 4 (Grk4) from Mus musculus (Mouse).